The primary structure comprises 100 residues: Urease subunit gamma (100 aa).

The protein belongs to the urease gamma subunit family. As to quaternary structure, heterotrimer of UreA (gamma), UreB (beta) and UreC (alpha) subunits. Three heterotrimers associate to form the active enzyme.

It localises to the cytoplasm. It catalyses the reaction urea + 2 H2O + H(+) = hydrogencarbonate + 2 NH4(+). Its pathway is nitrogen metabolism; urea degradation; CO(2) and NH(3) from urea (urease route): step 1/1. The protein is Urease subunit gamma of Clostridium perfringens.